The chain runs to 95 residues: UPF0235 protein AnaeK_1146 (95 aa).

Belongs to the UPF0235 family.

The sequence is that of UPF0235 protein AnaeK_1146 from Anaeromyxobacter sp. (strain K).